The chain runs to 807 residues: Glycerol-3-phosphate acyltransferase (807 aa).

Residues 305–310 (CHRSHM) carry the HXXXXD motif motif.

This sequence belongs to the GPAT/DAPAT family.

It localises to the cell inner membrane. It catalyses the reaction sn-glycerol 3-phosphate + an acyl-CoA = a 1-acyl-sn-glycero-3-phosphate + CoA. It participates in phospholipid metabolism; CDP-diacylglycerol biosynthesis; CDP-diacylglycerol from sn-glycerol 3-phosphate: step 1/3. This is Glycerol-3-phosphate acyltransferase from Vibrio atlanticus (strain LGP32) (Vibrio splendidus (strain Mel32)).